Here is a 468-residue protein sequence, read N- to C-terminus: MITTRFAPSPTGFLHVGGVRTALFSWLYAKNNNGKFILRIEDTDLERSTQEAVDAILDGMSWLGLKNDGEIYYQTKRFDRYKEVIQELIADGKAYYCSCSKERLEELREYQQANNLKTGYDGKCRDANYIPQQGESYVVRFKNPQDGVVSWDDAVKGRISISNHELDDMIIQRADGSPTYNFCVVVDDIDMAITHIIRGDDHVNNTPKQINIYKALNANVPVFAHVPMILGPDGAKLSKRHGAVNVMQYREDGYLPQAILNYLVRLGWSHGDQEIFSIEEMIKAFNLEHINASPSRFDFEKLKWLNKHYIKESKFDDIQTEVEYHFAKIGLDISNGPDLKELVAVMAEKVDTLVELAEKSSYFYSDDISYDENAVKKHIKASTGEIFVKLLENFEALDAQQWQDPDVLYNIVSTTAEQCQVGMGKVGMPLRVAITSSGQSPDIGITLKLLGKNKVVARLTKALEELCK.

The 'HIGH' region signature appears at 8–18; that stretch reads PSPTGFLHVGG. Zn(2+)-binding residues include Cys-97, Cys-99, Cys-124, and Asp-126. A 'KMSKS' region motif is present at residues 236 to 240; sequence KLSKR. Lys-239 is an ATP binding site.

It belongs to the class-I aminoacyl-tRNA synthetase family. Glutamate--tRNA ligase type 1 subfamily. Monomer. It depends on Zn(2+) as a cofactor.

The protein resides in the cytoplasm. The enzyme catalyses tRNA(Glu) + L-glutamate + ATP = L-glutamyl-tRNA(Glu) + AMP + diphosphate. Its function is as follows. Catalyzes the attachment of glutamate to tRNA(Glu) in a two-step reaction: glutamate is first activated by ATP to form Glu-AMP and then transferred to the acceptor end of tRNA(Glu). The polypeptide is Glutamate--tRNA ligase (Francisella tularensis subsp. holarctica (strain FTNF002-00 / FTA)).